Here is a 533-residue protein sequence, read N- to C-terminus: Retinoid isomerohydrolase (533 aa).

N-acetylserine is present on Ser2. 2 positions are modified to phosphothreonine: Thr101 and Thr105. Cys112 is lipidated: S-palmitoyl cysteine; in membrane form. Lys113 is subject to N6-acetyllysine. Residue Ser117 is modified to Phosphoserine. His180 is a Fe cation binding site. A lipid anchor (S-palmitoyl cysteine; in membrane form) is attached at Cys231. Fe cation is bound by residues His241 and His313. Residues Cys329 and Cys330 are each lipidated (S-palmitoyl cysteine; in membrane form). His527 lines the Fe cation pocket.

Belongs to the carotenoid oxygenase family. In terms of assembly, interacts with MYO7A; this mediates light-dependent intracellular transport of RPE65. The cofactor is Fe(2+). Palmitoylation by LRAT regulates ligand binding specificity; the palmitoylated form (membrane form) specifically binds all-trans-retinyl-palmitate, while the soluble unpalmitoylated form binds all-trans-retinol (vitamin A). As to expression, retinal pigment epithelium specific.

Its subcellular location is the cytoplasm. It localises to the cell membrane. It is found in the microsome membrane. It carries out the reaction an all-trans-retinyl ester + H2O = 11-cis-retinol + a fatty acid + H(+). It catalyses the reaction lutein = (3R,3'S)-zeaxanthin. The enzyme catalyses all-trans-retinyl hexadecanoate + H2O = 11-cis-retinol + hexadecanoate + H(+). Its function is as follows. Critical isomerohydrolase in the retinoid cycle involved in regeneration of 11-cis-retinal, the chromophore of rod and cone opsins. Catalyzes the cleavage and isomerization of all-trans-retinyl fatty acid esters to 11-cis-retinol which is further oxidized by 11-cis retinol dehydrogenase to 11-cis-retinal for use as visual chromophore. Essential for the production of 11-cis retinal for both rod and cone photoreceptors. Also capable of catalyzing the isomerization of lutein to meso-zeaxanthin an eye-specific carotenoid. The soluble form binds vitamin A (all-trans-retinol), making it available for LRAT processing to all-trans-retinyl ester. The membrane form, palmitoylated by LRAT, binds all-trans-retinyl esters, making them available for IMH (isomerohydrolase) processing to all-cis-retinol. The soluble form is regenerated by transferring its palmitoyl groups onto 11-cis-retinol, a reaction catalyzed by LRAT. The protein is Retinoid isomerohydrolase (RPE65) of Canis lupus familiaris (Dog).